Consider the following 474-residue polypeptide: Phosphatidylserine synthase 2 (474 aa).

At 1 to 62 (MLRSDVRRVA…DDGTNTFFWR (62 aa)) the chain is on the lumenal side. A helical membrane pass occupies residues 63–83 (AHTLTVLFILTCSLGYVTLLE). The Cytoplasmic segment spans residues 84–96 (ETPQDTAYNAKRG). Residues 97–117 (IIASILVFLCFGVTQAKDGPF) traverse the membrane as a helical segment. At 118–126 (SRPHPAYWR) the chain is on the lumenal side. Residues 127–147 (FWLCVSVVYELFLIFILFQTV) form a helical membrane-spanning segment. Over 148-313 (HDGRQFMKFI…EWKPASSLRR (166 aa)) the chain is Cytoplasmic. A helical transmembrane segment spans residues 314–334 (WLAVCGIIFVFLLAELNTFYL). Residue Lys-335 is a topological domain, lumenal. A helical transmembrane segment spans residues 336-356 (FVLWMPPEHYLVLLRLVFFVN). The Cytoplasmic segment spans residues 357–376 (VGGVAMREIYDFMDDLKFHK). Residues 377-397 (KLGQQAWMVAAITVTEFLIVV) traverse the membrane as a helical segment. At 398–403 (KYDPYT) the chain is on the lumenal side. The helical transmembrane segment at 404-424 (ITLPLPFYVTQCWILGIVLVL) threads the bilayer. The Cytoplasmic segment spans residues 425–474 (TWTVWRFFIRDITLRYKEIRQQKQHRNEEEKSHRNGDVNSEKDTNKHKKH). The segment covering 448–468 (QHRNEEEKSHRNGDVNSEKDT) has biased composition (basic and acidic residues). The disordered stretch occupies residues 448 to 474 (QHRNEEEKSHRNGDVNSEKDTNKHKKH).

The protein belongs to the phosphatidyl serine synthase family.

Its subcellular location is the endoplasmic reticulum membrane. It carries out the reaction a 1,2-diacyl-sn-glycero-3-phosphoethanolamine + L-serine = a 1,2-diacyl-sn-glycero-3-phospho-L-serine + ethanolamine. The enzyme catalyses 1-hexadecanoyl-2-(9Z-octadecenoyl)-sn-glycero-3-phosphoethanolamine + L-serine = 1-hexadecanoyl-2-(9Z-octadecenoyl)-sn-glycero-3-phospho-L-serine + ethanolamine. It catalyses the reaction 1-hexadecanoyl-2-(4Z,7Z,10Z,13Z,16Z,19Z-docosahexaenoyl)-sn-glycero-3-phosphoethanolamine + L-serine = 1-hexadecanoyl-2-(4Z,7Z,10Z,13Z,16Z,19Z-docosahexaenoyl)-sn-glycero-3-phosphoserine + ethanolamine. The catalysed reaction is 1-octadecanoyl-2-(5Z,8Z,11Z,14Z)-eicosatetraenoyl-sn-glycero-3-phosphoethanolamine + L-serine = 1-octadecanoyl-2-(5Z,8Z,11Z,14Z)-eicosatetraenoyl-sn-glycero-3-phosphoserine + ethanolamine. It carries out the reaction 1-octadecanoyl-2-(4Z,7Z,10Z,13Z,16Z,19Z-docosahexaenoyl)-sn-glycero-3-phosphoethanolamine + L-serine = 1-octadecanoyl-2-(4Z,7Z,10Z,13Z,16Z,19Z-docosahexaenoyl)-sn-glycero-3-phosphoserine + ethanolamine. The enzyme catalyses 1-(1Z-octadecenyl)-2-(4Z,7Z,10Z,13Z,16Z,19Z-docosahexaenoyl)-sn-glycero-3-phosphoethanolamine + L-serine = 1-(1Z-octadecenyl)-2-(4Z,7Z,10Z,13Z,16Z,19Z-docosahexaenoyl)-sn-glycero-3-phospho-L-serine + ethanolamine. It catalyses the reaction 1-octadecanoyl-2-(9Z-octadecenoyl)-sn-glycero-3-phosphoethanolamine + L-serine = 1-octadecanoyl-2-(9Z-octadecenoyl)-sn-glycero-3-phospho-L-serine + ethanolamine. The catalysed reaction is 1-(1Z-octadecenyl)-2-(9Z-octadecenoyl)-sn-glycero-3-phosphoethanolamine + L-serine = 1-(1Z-octadecenyl)-2-(9Z-octadecenoyl)-sn-glycero-3-phospho-L-serine + ethanolamine. It carries out the reaction 1-(1Z-octadecenyl)-2-(5Z,8Z,11Z,14Z- eicosatetraenoyl)-sn-glycero-3-phosphoethanolamine + L-serine = 1-(1Z-octadecenyl)-2-(5Z,8Z,11Z,14Z-eicosatetraenoyl)-sn-glycero-3-phospho-L-serine + ethanolamine. It participates in phospholipid metabolism; phosphatidylserine biosynthesis. Its function is as follows. Catalyzes a base-exchange reaction in which the polar head group of phosphatidylethanolamine (PE) or phosphatidylcholine (PC) is replaced by L-serine. Catalyzes the conversion of phosphatatidylethanolamine and does not act on phosphatidylcholine. Can utilize both phosphatidylethanolamine (PE) plasmalogen and diacyl PE as substrate and the latter is six times better utilized, indicating the importance of an ester linkage at the sn-1 position. Although it shows no sn-1 fatty acyl preference, exhibits significant preference towards docosahexaenoic acid (22:6n-3) compared with 18:1 or 20:4 at the sn-2 position. This chain is Phosphatidylserine synthase 2 (ptdss2), found in Xenopus tropicalis (Western clawed frog).